A 274-amino-acid chain; its full sequence is MLTKRIIPCLDCDLQVPEGRVVKGVEFKEIKYAGNPVDLATRYYEMGADEIVILDITASYERRATMADVIDRLTENVFIPICVGGGIRKVEDYTKMLKAGADKCSTNTAAIKNPELLTEASKVVGSQAVVVGIDAKRRYVDNPSDAPDKNVVETDEGYCWFDCSIYGGREFTGMDAIEWAVKCQELGAGEILLTSMDGDGTKEGYDIALNKAINDAIDIPVIASGGGGNPAHILDVFQKTDVSAALAASIFHFNQYSINDVKQYLKENNVPVRL.

Active-site residues include Asp11 and Asp134.

The protein belongs to the HisA/HisF family. Heterodimer of HisH and HisF.

The protein localises to the cytoplasm. It catalyses the reaction 5-[(5-phospho-1-deoxy-D-ribulos-1-ylimino)methylamino]-1-(5-phospho-beta-D-ribosyl)imidazole-4-carboxamide + L-glutamine = D-erythro-1-(imidazol-4-yl)glycerol 3-phosphate + 5-amino-1-(5-phospho-beta-D-ribosyl)imidazole-4-carboxamide + L-glutamate + H(+). The protein operates within amino-acid biosynthesis; L-histidine biosynthesis; L-histidine from 5-phospho-alpha-D-ribose 1-diphosphate: step 5/9. Its function is as follows. IGPS catalyzes the conversion of PRFAR and glutamine to IGP, AICAR and glutamate. The HisF subunit catalyzes the cyclization activity that produces IGP and AICAR from PRFAR using the ammonia provided by the HisH subunit. The polypeptide is Imidazole glycerol phosphate synthase subunit HisF (Methanobrevibacter smithii (strain ATCC 35061 / DSM 861 / OCM 144 / PS)).